The chain runs to 130 residues: Small ribosomal subunit protein uS11 (130 aa).

It belongs to the universal ribosomal protein uS11 family. As to quaternary structure, part of the 30S ribosomal subunit. Interacts with proteins S7 and S18. Binds to IF-3.

In terms of biological role, located on the platform of the 30S subunit, it bridges several disparate RNA helices of the 16S rRNA. Forms part of the Shine-Dalgarno cleft in the 70S ribosome. In Kosmotoga olearia (strain ATCC BAA-1733 / DSM 21960 / TBF 19.5.1), this protein is Small ribosomal subunit protein uS11.